The primary structure comprises 302 residues: HPr kinase/phosphorylase (302 aa).

Residues His-136 and Lys-157 contribute to the active site. 151-158 (GESGIGKS) is a binding site for ATP. Position 158 (Ser-158) interacts with Mg(2+). Residue Asp-175 is the Proton acceptor; for phosphorylation activity. Proton donor; for dephosphorylation activity of the active site. An important for the catalytic mechanism of both phosphorylation and dephosphorylation region spans residues 198–207 (LEVRGLGIID). Glu-199 is a binding site for Mg(2+). Arg-240 is a catalytic residue. Positions 261–266 (PIRPGR) are important for the catalytic mechanism of dephosphorylation.

This sequence belongs to the HPrK/P family. Homohexamer. Requires Mg(2+) as cofactor.

The catalysed reaction is [HPr protein]-L-serine + ATP = [HPr protein]-O-phospho-L-serine + ADP + H(+). It catalyses the reaction [HPr protein]-O-phospho-L-serine + phosphate + H(+) = [HPr protein]-L-serine + diphosphate. In terms of biological role, catalyzes the ATP- as well as the pyrophosphate-dependent phosphorylation of a specific serine residue in HPr, a phosphocarrier protein of the phosphoenolpyruvate-dependent sugar phosphotransferase system (PTS). HprK/P also catalyzes the pyrophosphate-producing, inorganic phosphate-dependent dephosphorylation (phosphorolysis) of seryl-phosphorylated HPr (P-Ser-HPr). The two antagonistic activities of HprK/P are regulated by several intracellular metabolites, which change their concentration in response to the absence or presence of rapidly metabolisable carbon sources (glucose, fructose, etc.) in the growth medium. Therefore, by controlling the phosphorylation state of HPr, HPrK/P is a sensor enzyme that plays a major role in the regulation of carbon metabolism and sugar transport: it mediates carbon catabolite repression (CCR), and regulates PTS-catalyzed carbohydrate uptake and inducer exclusion. This Clostridium beijerinckii (strain ATCC 51743 / NCIMB 8052) (Clostridium acetobutylicum) protein is HPr kinase/phosphorylase.